Reading from the N-terminus, the 1235-residue chain is Myosin-1 (1235 aa).

A disordered region spans residues 1–34; the sequence is MGITKRSKDKAARAERSAGGDKSSSAKPKKATFD. Over residues 9–19 the composition is skewed to basic and acidic residues; the sequence is DKAARAERSAG. A Myosin motor domain is found at 41–715; sequence IGVSDLTLLS…TLFALEHMRD (675 aa). 134 to 141 lines the ATP pocket; sequence GESGAGKT. Residues 405–487 form an actin-binding region; that stretch reads SIGILDIYGF…PGIFSAMKDA (83 aa). IQ domains lie at 719–739 and 740–765; these read HNMA…RAEA and AIRI…EGHK. Positions 773–962 constitute a TH1 domain; the sequence is RRRMSILGSR…TVHTQPGEPP (190 aa). Disordered stretches follow at residues 949–1076 and 1135–1235; these read YKSS…AAKP and APPV…EDDW. Residues 982–1046 are compositionally biased toward low complexity; sequence KGKLIKPGGP…PGAAATPAAA (65 aa). Over residues 1050 to 1062 the composition is skewed to polar residues; the sequence is PSHTRQQSSTSTV. Pro residues predominate over residues 1063–1073; sequence RPPPPPPPAPA. Residues 1075 to 1134 enclose the SH3 domain; the sequence is KPKIMAKVLYDFAGTRENELSIKAGDMIEIVQKENNGWWLAKTPEGQAWVPAAYVEEQAP. Over residues 1135–1150 the composition is skewed to pro residues; it reads APPVVAPRPPPPPPPA. Positions 1180 to 1210 are enriched in polar residues; sequence SLQNRDSGMSLNGANGSGSDASRSSTPTPSI.

Belongs to the TRAFAC class myosin-kinesin ATPase superfamily. Myosin family.

It localises to the cytoplasm. The protein localises to the cytoskeleton. It is found in the actin patch. In terms of biological role, type-I myosin implicated in the organization of the actin cytoskeleton. Required for proper actin cytoskeleton polarization. At the cell cortex, assembles in patch-like structures together with proteins from the actin-polymerizing machinery and promotes actin assembly. Functions as actin nucleation-promoting factor (NPF) for the Arp2/3 complex. The polypeptide is Myosin-1 (myo-1) (Neurospora crassa (strain ATCC 24698 / 74-OR23-1A / CBS 708.71 / DSM 1257 / FGSC 987)).